Here is a 74-residue protein sequence, read N- to C-terminus: Large ribosomal subunit protein bL31 (74 aa).

Positions 16, 18, 38, and 41 each coordinate Zn(2+).

Belongs to the bacterial ribosomal protein bL31 family. Type A subfamily. In terms of assembly, part of the 50S ribosomal subunit. Requires Zn(2+) as cofactor.

Binds the 23S rRNA. This chain is Large ribosomal subunit protein bL31, found in Streptomyces griseus subsp. griseus (strain JCM 4626 / CBS 651.72 / NBRC 13350 / KCC S-0626 / ISP 5235).